The primary structure comprises 238 residues: Survival of motor neuron-related-splicing factor 30 (238 aa).

One can recognise a Tudor domain in the interval S72–K132. Residues K142–K160 carry the Nuclear localization signal motif. S201 is modified (phosphoserine). At K219 the chain carries N6-acetyllysine.

The protein belongs to the SMN family. Associates with spliceosomes. Associates with U4/U5/U6 tri-snRNP and with U2 snRNP.

It is found in the nucleus speckle. Its subcellular location is the nucleus. It localises to the cajal body. In terms of biological role, involved in spliceosome assembly. In Rattus norvegicus (Rat), this protein is Survival of motor neuron-related-splicing factor 30 (Smndc1).